Reading from the N-terminus, the 244-residue chain is Tetraspanin-2A (244 aa).

Residues 1 to 22 (MGIGYGASDEQLEKQIGCVKYT) are Cytoplasmic-facing. A helical membrane pass occupies residues 23–43 (LFCFNIVAWMISTALFALTVW). Over 44–61 (LRAEPGFNDWLRILEAQS) the chain is Extracellular. A helical transmembrane segment spans residues 62–82 (FYIGVYVLIGISIVMMAVSFL). At 83–91 (GCLSALMEN) the chain is on the cytoplasmic side. A helical transmembrane segment spans residues 92–112 (TLALFVFVGTQVFGFIAIVAG). Residues 113-206 (SAVLLQFSTI…TWFFEGKTGW (94 aa)) are Extracellular-facing. A helical transmembrane segment spans residues 207–227 (IVALAMTLGLLNVICAVMSFV). Residues 228–244 (LVQAVKKEEEQASNYRR) lie on the Cytoplasmic side of the membrane.

The protein belongs to the tetraspanin (TM4SF) family. As to quaternary structure, forms a complex with Ssk and mesh.

The protein resides in the apicolateral cell membrane. It is found in the cell junction. It localises to the septate junction. Required for assembly of smooth septate junctions (sSJs), together with Ssk and mesh. Important for barrier function of the midgut epithelium. The chain is Tetraspanin-2A from Drosophila melanogaster (Fruit fly).